Reading from the N-terminus, the 294-residue chain is Glycine N-acyltransferase-like protein 2 (294 aa).

An N6-acetyllysine modification is found at Lys19.

Belongs to the glycine N-acyltransferase family. Post-translationally, acetylation at Lys-19 drastically decreases the production of N-oleoyl and N-arachidonoyl glycines. In terms of tissue distribution, expressed at highest levels in salivary gland and trachea. Also detected in thyroid gland, spinal cord, prostate, lung and fetal brain.

It localises to the endoplasmic reticulum. The catalysed reaction is an acyl-CoA + glycine = an N-acylglycine + CoA + H(+). The enzyme catalyses (9Z)-hexadecenoyl-CoA + glycine = N-(9Z-hexadecenoyl)-glycine + CoA + H(+). It catalyses the reaction octadecanoyl-CoA + glycine = N-octadecanoylglycine + CoA + H(+). It carries out the reaction (5Z,8Z,11Z,14Z)-eicosatetraenoyl-CoA + glycine = N-(5Z,8Z,11Z,14Z)-eicosatetraenoyl-glycine + CoA + H(+). The catalysed reaction is (9Z)-octadecenoyl-CoA + glycine = N-(9Z-octadecenoyl)glycine + CoA + H(+). The enzyme catalyses octanoyl-CoA + glycine = N-octanoylglycine + CoA + H(+). It catalyses the reaction decanoyl-CoA + glycine = N-decanoylglycine + CoA + H(+). It carries out the reaction tetradecanoyl-CoA + glycine = N-tetradecanoylglycine + CoA + H(+). The catalysed reaction is dodecanoyl-CoA + glycine = N-dodecanoylglycine + CoA + H(+). The enzyme catalyses (9Z,12Z)-octadecadienoyl-CoA + glycine = N-(9Z,12Z-octadecadienoyl)-glycine + CoA + H(+). It catalyses the reaction a fatty acyl-CoA + glycine = an N-(fatty acyl)-glycine + CoA + H(+). Mitochondrial acyltransferase which transfers the acyl group to the N-terminus of glycine. Conjugates numerous substrates, such as arachidonoyl-CoA and saturated medium and long-chain acyl-CoAs ranging from chain-length C8:0-CoA to C18:0-CoA, to form a variety of N-acylglycines. Shows a preference for monounsaturated fatty acid oleoyl-CoA (C18:1-CoA) as an acyl donor. Does not exhibit any activity toward C22:6-CoA and chenodeoxycholoyl-CoA, nor toward serine or alanine. This chain is Glycine N-acyltransferase-like protein 2, found in Homo sapiens (Human).